Reading from the N-terminus, the 254-residue chain is MANKIEVKELLEAGVHFGHMTRKWDPNMAPYIYMERNGIHIINLYKTAAKIEEANEALKKIAASGRKILFVATKKQAKDIVADKAKAANMPYITERWPGGMLTNFVTIRKAVKKMSSIDKMKKDGTFNTLSKKERLQVDRLRAKLEKNLGSIADMSRLPAALFVVDIKAEHIAIKEAQKLNIPVFAMVDTNSDPREVDYVIPANDDASKSIDKILSLVTTAVIEGLSDRGAEKEVEAAEEAPAAEAEAAPATEE.

A disordered region spans residues aspartate 228–glutamate 254. Over residues glutamate 240–glutamate 254 the composition is skewed to low complexity.

Belongs to the universal ribosomal protein uS2 family.

This Flavobacterium johnsoniae (strain ATCC 17061 / DSM 2064 / JCM 8514 / BCRC 14874 / CCUG 350202 / NBRC 14942 / NCIMB 11054 / UW101) (Cytophaga johnsonae) protein is Small ribosomal subunit protein uS2.